A 231-amino-acid chain; its full sequence is Dephospho-CoA kinase domain-containing protein (231 aa).

The DPCK domain maps to 3 to 207 (LVGLTGGIAS…RSMEYLPLRL (205 aa)). Residue 8 to 15 (GGIASGKS) participates in ATP binding.

It belongs to the CoaE family.

In Mus musculus (Mouse), this protein is Dephospho-CoA kinase domain-containing protein (Dcakd).